We begin with the raw amino-acid sequence, 525 residues long: MTENIHKHRILILDFGSQYTQLVARRVRELGVYCELWAWDVTEAQIRDFNPSGIILSGGPESTTEENSPRAPQYVFEAGVPVFGVCYGMQTMAMQLGGHVEGSNEREFGYAQVEVLTDSALVRGIEDSLTADGKPLLDVWMSHGDKVTAIPSDFVTVASTESCPFAIMANEEKRFYGVQFHPEVTHTRQGMRMLERFVRDICQCEALWTPAKIIDDAVARIREQVGDDKVILGLSGGVDSSVTAMLLHCAIGKNLTCVFVDNGLLRLNEAEQVMDMFGDHFGLNIVHVPAEERFLSALAGENDPEAKRKIIGRVFVEVFDEEALKLEDVKWLAQGTIYPDVIESAASATGKAHVIKSHHNVGGLPKEMKMGLVEPLKELFKDEVRKIGLELGLPYDMLYRHPFPGPGLGVRVLGEVKKEYCDLLRRADAIFIEELRKADLYDKVSQAFTVFLPVRSVGVMGDGRKYDWVVSLRAVETIDFMTAHWAHLPYDFLGRVSNRIINEVNGISRVVYDISGKPPATIEWE.

The region spanning 9–207 (RILILDFGSQ…VRDICQCEAL (199 aa)) is the Glutamine amidotransferase type-1 domain. Residue Cys-86 is the Nucleophile of the active site. Residues His-181 and Glu-183 contribute to the active site. One can recognise a GMPS ATP-PPase domain in the interval 208 to 400 (WTPAKIIDDA…LGLPYDMLYR (193 aa)). Position 235-241 (235-241 (SGGVDSS)) interacts with ATP.

In terms of assembly, homodimer.

The enzyme catalyses XMP + L-glutamine + ATP + H2O = GMP + L-glutamate + AMP + diphosphate + 2 H(+). Its pathway is purine metabolism; GMP biosynthesis; GMP from XMP (L-Gln route): step 1/1. Catalyzes the synthesis of GMP from XMP. This Salmonella schwarzengrund (strain CVM19633) protein is GMP synthase [glutamine-hydrolyzing].